We begin with the raw amino-acid sequence, 165 residues long: NADPH-dependent 7-cyano-7-deazaguanine reductase (165 aa).

Cys56 functions as the Thioimide intermediate in the catalytic mechanism. The active-site Proton donor is the Asp63. Residues 78-80 (VES) and 97-98 (HE) contribute to the substrate site.

The protein belongs to the GTP cyclohydrolase I family. QueF type 1 subfamily.

It is found in the cytoplasm. The catalysed reaction is 7-aminomethyl-7-carbaguanine + 2 NADP(+) = 7-cyano-7-deazaguanine + 2 NADPH + 3 H(+). It functions in the pathway tRNA modification; tRNA-queuosine biosynthesis. In terms of biological role, catalyzes the NADPH-dependent reduction of 7-cyano-7-deazaguanine (preQ0) to 7-aminomethyl-7-deazaguanine (preQ1). The chain is NADPH-dependent 7-cyano-7-deazaguanine reductase from Bacillus cytotoxicus (strain DSM 22905 / CIP 110041 / 391-98 / NVH 391-98).